The chain runs to 279 residues: Tryptophan synthase alpha chain (279 aa).

Catalysis depends on proton acceptor residues Glu-50 and Asp-61.

It belongs to the TrpA family. Tetramer of two alpha and two beta chains.

The enzyme catalyses (1S,2R)-1-C-(indol-3-yl)glycerol 3-phosphate + L-serine = D-glyceraldehyde 3-phosphate + L-tryptophan + H2O. The protein operates within amino-acid biosynthesis; L-tryptophan biosynthesis; L-tryptophan from chorismate: step 5/5. The alpha subunit is responsible for the aldol cleavage of indoleglycerol phosphate to indole and glyceraldehyde 3-phosphate. This chain is Tryptophan synthase alpha chain, found in Allorhizobium ampelinum (strain ATCC BAA-846 / DSM 112012 / S4) (Agrobacterium vitis (strain S4)).